Here is a 335-residue protein sequence, read N- to C-terminus: DNA polymerase beta (335 aa).

Residue Lys41 forms a Glycyl lysine isopeptide (Lys-Gly) (interchain with G-Cter in ubiquitin) linkage. Lys60 provides a ligand contact to K(+). Residue Lys60 coordinates Na(+). Residue Lys61 forms a Glycyl lysine isopeptide (Lys-Gly) (interchain with G-Cter in ubiquitin) linkage. Leu62 and Val65 together coordinate K(+). Na(+) is bound by residues Leu62 and Val65. Lys72 (nucleophile; Schiff-base intermediate with DNA; for 5'-dRP lyase activity) is an active-site residue. N6-acetyllysine is present on Lys72. Lys81 is covalently cross-linked (Glycyl lysine isopeptide (Lys-Gly) (interchain with G-Cter in ubiquitin)). At Arg83 the chain carries Omega-N-methylarginine; by PRMT6. The K(+) site is built by Thr101, Val103, and Ile106. Residues Thr101, Val103, and Ile106 each contribute to the Na(+) site. Arg149 provides a ligand contact to a 2'-deoxyribonucleoside 5'-triphosphate. Arg152 bears the Omega-N-methylarginine; by PRMT6 mark. Residues Ser180, Arg183, Gly189, and Asp190 each contribute to the a 2'-deoxyribonucleoside 5'-triphosphate site. Residues 183–192 (RGAESSGDMD) are DNA-binding. Positions 190, 192, and 256 each coordinate Mg(2+).

It belongs to the DNA polymerase type-X family. In terms of assembly, monomer. Binds single-stranded DNA (ssDNA). Interacts with APEX1, LIG1, LIG3, FEN1, PCNA and XRCC1. Interacts with HUWE1/ARF-BP1, STUB1/CHIP and USP47. Interacts with FAM168A. Requires Mg(2+) as cofactor. Methylation by PRMT6 stimulates the polymerase activity by enhancing DNA binding and processivity. In terms of processing, ubiquitinated at Lys-41, Lys-61 and Lys-81: monoubiquitinated by HUWE1/ARF-BP1. Monoubiquitinated protein is then the target of STUB1/CHIP, which catalyzes polyubiquitination from monoubiquitin, leading to degradation by the proteasome. USP47 mediates the deubiquitination of monoubiquitinated protein, preventing polyubiquitination by STUB1/CHIP and its subsequent degradation.

The protein localises to the nucleus. It is found in the cytoplasm. The enzyme catalyses DNA(n) + a 2'-deoxyribonucleoside 5'-triphosphate = DNA(n+1) + diphosphate. The catalysed reaction is a 5'-end 2'-deoxyribose-2'-deoxyribonucleotide-DNA = (2E,4S)-4-hydroxypenten-2-al-5-phosphate + a 5'-end 5'-phospho-2'-deoxyribonucleoside-DNA + H(+). It catalyses the reaction 2'-deoxyribonucleotide-(2'-deoxyribose 5'-phosphate)-2'-deoxyribonucleotide-DNA = a 3'-end 2'-deoxyribonucleotide-(2,3-dehydro-2,3-deoxyribose 5'-phosphate)-DNA + a 5'-end 5'-phospho-2'-deoxyribonucleoside-DNA + H(+). Its function is as follows. Repair polymerase that plays a key role in base-excision repair. During this process, the damaged base is excised by specific DNA glycosylases, the DNA backbone is nicked at the abasic site by an apurinic/apyrimidic (AP) endonuclease, and POLB removes 5'-deoxyribose-phosphate from the preincised AP site acting as a 5'-deoxyribose-phosphate lyase (5'-dRP lyase); through its DNA polymerase activity, it adds one nucleotide to the 3' end of the arising single-nucleotide gap. Conducts 'gap-filling' DNA synthesis in a stepwise distributive fashion rather than in a processive fashion as for other DNA polymerases. It is also able to cleave sugar-phosphate bonds 3' to an intact AP site, acting as an AP lyase. This is DNA polymerase beta (POLB) from Bos taurus (Bovine).